The following is a 463-amino-acid chain: Hexose-6-phosphate:phosphate antiporter (463 aa).

Topologically, residues 1–24 are cytoplasmic; it reads MLAFLNQVRKPTLDLPLDVRRKMW. Residues 25–45 traverse the membrane as a helical segment; it reads FKPFMQSYLVVFIGYLTMYLI. Residues 46-60 lie on the Periplasmic side of the membrane; that stretch reads RKNFNIAQNDMISTY. The chain crosses the membrane as a helical span at residues 61-81; that stretch reads GLSMTELGMIGLGFSITYGVG. The Cytoplasmic portion of the chain corresponds to 82–96; that stretch reads KTLVSYYADGKNTKQ. A helical transmembrane segment spans residues 97-117; sequence FLPFMLILSAICMLGFSASMG. At 118–122 the chain is on the periplasmic side; that stretch reads AGSTS. A helical transmembrane segment spans residues 123–143; that stretch reads LFLMIAFYALSGFFQSTGGSC. Over 144 to 159 the chain is Cytoplasmic; sequence SYSTITKWTPRRKRGT. The chain crosses the membrane as a helical span at residues 160–180; sequence FLGFWNISHNLGGAGAAGVAL. Over 181–189 the chain is Periplasmic; the sequence is FGANYLFDG. Residues 190–210 form a helical membrane-spanning segment; the sequence is HVIGMFIFPSIIALIVGFIGL. Over 211-259 the chain is Cytoplasmic; sequence RFGSDSPESYGLGKAEELFGEEISEEDKETEENEMTKWQIFVEYVLKNK. The helical transmembrane segment at 260–280 threads the bilayer; that stretch reads VIWLLCFSNIFLYVVRIGIDQ. Residues 281–297 lie on the Periplasmic side of the membrane; sequence WSTVYAFQELKLSKEVA. The helical transmembrane segment at 298–318 threads the bilayer; the sequence is IQGFTLFEVGALVGTLLWGWL. Topologically, residues 319-326 are cytoplasmic; sequence SDLANGRR. Residues 327–347 form a helical membrane-spanning segment; the sequence is ALVACVALALIIATLGVYQHA. Over 348–357 the chain is Periplasmic; sequence SNQYVYLASL. A helical transmembrane segment spans residues 358–378; that stretch reads FALGFLVFGPQLLIGVAAVGF. The Cytoplasmic segment spans residues 379-382; it reads VPKK. The chain crosses the membrane as a helical span at residues 383–403; the sequence is AIGAADGIKGTFAYLIGDSFA. At 404 to 425 the chain is on the periplasmic side; that stretch reads KLGLGMIADGTPVFGLTGWAGT. Residues 426–446 traverse the membrane as a helical segment; it reads FAALDAAAIGCICLMAMVAVM. The Cytoplasmic portion of the chain corresponds to 447 to 463; sequence EERKIRREKKIQQVNIA.

This sequence belongs to the major facilitator superfamily. Organophosphate:Pi antiporter (OPA) (TC 2.A.1.4) family.

The protein localises to the cell inner membrane. Its function is as follows. Mediates the exchange of external hexose 6-phosphate and internal inorganic phosphate. The polypeptide is Hexose-6-phosphate:phosphate antiporter (uhpT) (Salmonella typhimurium (strain LT2 / SGSC1412 / ATCC 700720)).